Reading from the N-terminus, the 416-residue chain is CBL-interacting serine/threonine-protein kinase 21 (416 aa).

Residues 12-264 form the Protein kinase domain; it reads YEIGRTIGEG…AEIIIKDSWF (253 aa). ATP is bound by residues 18 to 26 and Lys-41; that span reads IGEGNFAKV. Residue Asp-134 is the Proton acceptor of the active site. The activation loop stretch occupies residues 152-178; sequence DFGLSAVPKSGDMLSTACGSPCYIAPE. Residue Ser-156 is modified to Phosphoserine. Thr-167 is subject to Phosphothreonine. The 25-residue stretch at 291-315 folds into the NAF domain; the sequence is ASSNFINAFQIIAMSSDLDLSGLFE. Residues 321-351 are PPI; it reads RYKTRIGSKNTAQETIKKIEAAATYVSLSVE.

The protein belongs to the protein kinase superfamily. CAMK Ser/Thr protein kinase family. SNF1 subfamily. As to quaternary structure, interacts with CBL9. Requires Mn(2+) as cofactor.

The enzyme catalyses L-seryl-[protein] + ATP = O-phospho-L-seryl-[protein] + ADP + H(+). It carries out the reaction L-threonyl-[protein] + ATP = O-phospho-L-threonyl-[protein] + ADP + H(+). Functionally, CIPK serine-threonine protein kinases interact with CBL proteins. Binding of a CBL protein to the regulatory NAF domain of CIPK protein lead to the activation of the kinase in a calcium-dependent manner. This chain is CBL-interacting serine/threonine-protein kinase 21 (CIPK21), found in Arabidopsis thaliana (Mouse-ear cress).